A 342-amino-acid chain; its full sequence is NADH-ubiquinone oxidoreductase chain 2 (342 aa).

Transmembrane regions (helical) follow at residues 25–45 (TPWL…IPML), 58–78 (IKYF…ILII), 94–114 (MMIM…FWLP), 146–166 (MSSF…MGGL), 174–194 (ILAY…TISE), 195–215 (NTWE…IFMF), 238–258 (FMMM…GFLP), 274–294 (LVLL…RISF), and 316–336 (VVAL…TSNF).

It belongs to the complex I subunit 2 family.

It is found in the mitochondrion inner membrane. The enzyme catalyses a ubiquinone + NADH + 5 H(+)(in) = a ubiquinol + NAD(+) + 4 H(+)(out). Core subunit of the mitochondrial membrane respiratory chain NADH dehydrogenase (Complex I) that is believed to belong to the minimal assembly required for catalysis. Complex I functions in the transfer of electrons from NADH to the respiratory chain. The immediate electron acceptor for the enzyme is believed to be ubiquinone. This chain is NADH-ubiquinone oxidoreductase chain 2 (ND2), found in Locusta migratoria (Migratory locust).